Reading from the N-terminus, the 370-residue chain is Putative F-box protein At3g10430 (370 aa).

In terms of domain architecture, F-box spans 1–47; it reads MGSSLPFDLILEILQRTPAESLLRFKSTCKKWYELISNDKRFMYKHL.

This Arabidopsis thaliana (Mouse-ear cress) protein is Putative F-box protein At3g10430.